The sequence spans 585 residues: Switch-associated protein 70 (585 aa).

A PH domain is found at D210 to H306. The stretch at H316–K532 forms a coiled coil.

In terms of assembly, the SWAP complex consists of NPM1, NCL, PARP1 and SWAP70. Tyrosine-phosphorylated.

The protein resides in the cytoplasm. The protein localises to the cell membrane. It localises to the nucleus. It is found in the cell projection. Its subcellular location is the lamellipodium. Functionally, phosphatidylinositol 3,4,5-trisphosphate-dependent guanine nucleotide exchange factor (GEF) which, independently of RAS, transduces signals from tyrosine kinase receptors to RAC. It also mediates signaling of membrane ruffling. Regulates the actin cytoskeleton as an effector or adapter protein in response to agonist stimulated phosphatidylinositol (3,4)-bisphosphate production and cell protrusion. This chain is Switch-associated protein 70 (SWAP70), found in Bos taurus (Bovine).